The sequence spans 413 residues: CinA-like protein (413 aa).

This sequence belongs to the CinA family.

In Crocosphaera subtropica (strain ATCC 51142 / BH68) (Cyanothece sp. (strain ATCC 51142)), this protein is CinA-like protein.